We begin with the raw amino-acid sequence, 63 residues long: Putative F-box protein At1g47702 (63 aa).

The F-box domain maps to K23 to N63.

This Arabidopsis thaliana (Mouse-ear cress) protein is Putative F-box protein At1g47702.